Consider the following 267-residue polypeptide: Orotidine 5'-phosphate decarboxylase (267 aa).

Ser2 bears the N-acetylserine mark. Substrate-binding positions include Asp37, 59–61 (KTH), and 91–100 (DRKFADIGNT). Lys93 (proton donor) is an active-site residue. Glycyl lysine isopeptide (Lys-Gly) (interchain with G-Cter in ubiquitin) cross-links involve residues Lys93 and Lys209. Substrate contacts are provided by Tyr217 and Arg235. Residue Lys253 forms a Glycyl lysine isopeptide (Lys-Gly) (interchain with G-Cter in ubiquitin) linkage.

It belongs to the OMP decarboxylase family.

The catalysed reaction is orotidine 5'-phosphate + H(+) = UMP + CO2. It participates in pyrimidine metabolism; UMP biosynthesis via de novo pathway; UMP from orotate: step 2/2. The polypeptide is Orotidine 5'-phosphate decarboxylase (URA3) (Saccharomyces cerevisiae (strain ATCC 204508 / S288c) (Baker's yeast)).